Consider the following 43-residue polypeptide: uncharacterized protein (43 aa).

Residues methionine 1–asparagine 43 are disordered. Residues glutamate 20–glutamine 35 are compositionally biased toward acidic residues.

This is an uncharacterized protein from Dictyostelium discoideum (Social amoeba).